We begin with the raw amino-acid sequence, 216 residues long: MNLVLMGLPGAGKGTQAEKIVETYGIPHISTGDMFRAAIKEGTPLGLQAKEYMDRGDLVPDEVTIGIVRERLSKDDCQKGFLLDGFPRTVAQAEALENILAELNRSIDYVIHIQVDKDILMERLTGRRICKNCGATYHLVFNPPAKSGVCDKCGGELYQRADDNEETVANRLEVNIKQTQPLLEFYEKKGYLRHINGQQDIEKVFADIRELLGGLQ.

Position 10–15 (10–15 (GAGKGT)) interacts with ATP. The segment at 30–59 (STGDMFRAAIKEGTPLGLQAKEYMDRGDLV) is NMP. AMP-binding positions include Thr-31, Arg-36, 57–59 (DLV), 85–88 (GFPR), and Gln-92. The segment at 126-163 (GRRICKNCGATYHLVFNPPAKSGVCDKCGGELYQRADD) is LID. Residue Arg-127 participates in ATP binding. Residues Cys-130 and Cys-133 each coordinate Zn(2+). An ATP-binding site is contributed by 136-137 (TY). Zn(2+) is bound by residues Cys-150 and Cys-153. Arg-160 and Arg-171 together coordinate AMP. Gln-199 is an ATP binding site.

The protein belongs to the adenylate kinase family. Monomer.

The protein resides in the cytoplasm. The catalysed reaction is AMP + ATP = 2 ADP. It participates in purine metabolism; AMP biosynthesis via salvage pathway; AMP from ADP: step 1/1. In terms of biological role, catalyzes the reversible transfer of the terminal phosphate group between ATP and AMP. Plays an important role in cellular energy homeostasis and in adenine nucleotide metabolism. The chain is Adenylate kinase from Geobacillus sp. (strain WCH70).